The following is a 291-amino-acid chain: ATP synthase gamma chain 2 (291 aa).

Positions 187–208 are disordered; sequence LLPHPDKDESQDSKPNDATSRW. Residues 190–201 show a composition bias toward basic and acidic residues; the sequence is HPDKDESQDSKP.

The protein belongs to the ATPase gamma chain family. In terms of assembly, F-type ATPases have 2 components, CF(1) - the catalytic core - and CF(0) - the membrane proton channel. CF(1) has five subunits: alpha(3), beta(3), gamma(1), delta(1), epsilon(1). CF(0) has three main subunits: a, b and c.

It localises to the cell inner membrane. In terms of biological role, produces ATP from ADP in the presence of a proton gradient across the membrane. The gamma chain is believed to be important in regulating ATPase activity and the flow of protons through the CF(0) complex. This chain is ATP synthase gamma chain 2, found in Photobacterium profundum (strain SS9).